The following is a 268-amino-acid chain: Ribosomal RNA small subunit methyltransferase A (268 aa).

6 residues coordinate S-adenosyl-L-methionine: Asn-18, Leu-20, Gly-45, Glu-66, Asp-91, and Asn-112.

Belongs to the class I-like SAM-binding methyltransferase superfamily. rRNA adenine N(6)-methyltransferase family. RsmA subfamily.

The protein localises to the cytoplasm. It carries out the reaction adenosine(1518)/adenosine(1519) in 16S rRNA + 4 S-adenosyl-L-methionine = N(6)-dimethyladenosine(1518)/N(6)-dimethyladenosine(1519) in 16S rRNA + 4 S-adenosyl-L-homocysteine + 4 H(+). Its function is as follows. Specifically dimethylates two adjacent adenosines (A1518 and A1519) in the loop of a conserved hairpin near the 3'-end of 16S rRNA in the 30S particle. May play a critical role in biogenesis of 30S subunits. In Shewanella baltica (strain OS185), this protein is Ribosomal RNA small subunit methyltransferase A.